A 146-amino-acid chain; its full sequence is Type II secretion system core protein G (146 aa).

Residues 1 to 9 constitute a propeptide, leader sequence; it reads MKKMRKQTG. Position 10 is an N-methylphenylalanine (phenylalanine 10). Residues 10 to 30 form a helical membrane-spanning segment; it reads FTLLEVMVVVVILGILASFVV.

It belongs to the GSP G family. In terms of assembly, type II secretion system is composed of four main components: the outer membrane complex, the inner membrane complex, the cytoplasmic secretion ATPase and the periplasm-spanning pseudopilus. Forms homomultimers. Interacts with EspL. In terms of processing, cleaved by the prepilin peptidase. Post-translationally, methylated by prepilin peptidase at the amino group of the N-terminal phenylalanine once the leader sequence is cleaved.

The protein localises to the cell inner membrane. In terms of biological role, core component of the type II secretion system required for the energy-dependent secretion of extracellular factors such as proteases and toxins from the periplasm. Pseudopilin (pilin-like) protein that polymerizes to form the pseudopilus. Further polymerization triggers pseudopilus growth. The chain is Type II secretion system core protein G (epsG) from Vibrio cholerae serotype O1 (strain ATCC 39315 / El Tor Inaba N16961).